We begin with the raw amino-acid sequence, 512 residues long: Flavonoid 3'-monooxygenase (512 aa).

A helical membrane pass occupies residues 1–21 (MEILSLILYTVIFSFLLQFIL). Residues 22-512 (RSFFRKRYPL…PRLEAQAYIG (491 aa)) lie on the Cytoplasmic side of the membrane. Cysteine 447 serves as a coordination point for heme.

This sequence belongs to the cytochrome P450 family. Requires heme as cofactor. High expression in petals and ovaries and to a lower extent in sepals, pedicels, anthers and stems. Not detected in leaves, style or roots.

Its subcellular location is the endoplasmic reticulum membrane. The enzyme catalyses a 3'-unsubstituted flavone + reduced [NADPH--hemoprotein reductase] + O2 = a 3'-hydroxyflavone + oxidized [NADPH--hemoprotein reductase] + H2O + H(+). It participates in secondary metabolite biosynthesis; flavonoid biosynthesis. In terms of biological role, catalyzes the 3'-hydroxylation of the flavonoid B-ring to the 3',4'-hydroxylated state. Convert naringenin to eriodictyol and dihydrokaempferol to dihydroquercetin. The polypeptide is Flavonoid 3'-monooxygenase (CYP75B2) (Petunia hybrida (Petunia)).